A 249-amino-acid polypeptide reads, in one-letter code: Aspartate/glutamate leucyltransferase (249 aa).

It belongs to the R-transferase family. Bpt subfamily.

It is found in the cytoplasm. It carries out the reaction N-terminal L-glutamyl-[protein] + L-leucyl-tRNA(Leu) = N-terminal L-leucyl-L-glutamyl-[protein] + tRNA(Leu) + H(+). It catalyses the reaction N-terminal L-aspartyl-[protein] + L-leucyl-tRNA(Leu) = N-terminal L-leucyl-L-aspartyl-[protein] + tRNA(Leu) + H(+). Functionally, functions in the N-end rule pathway of protein degradation where it conjugates Leu from its aminoacyl-tRNA to the N-termini of proteins containing an N-terminal aspartate or glutamate. In Brucella melitensis biotype 2 (strain ATCC 23457), this protein is Aspartate/glutamate leucyltransferase.